We begin with the raw amino-acid sequence, 408 residues long: MTFLQRLQGLADNKICAFAWFVVRRFDEERVPQAAASMTFTTLLALVPVLTVMVAVASIFPVFDRWSDSFVSFVNQTIVPQGADMVFDYINAFREQANRLTAIGSVMLVVTSLMLIRTIDNTFNRIWRVNSQRPWMMQFLVYWALLTFGPLSLGVGISFMVGSVQDAALASGAPQWSGALRTAATLTFMTLLLWGLYRFVPNRFVPARQAFVGALATAFCLETARSLFTWYMGNFDGYRSIYGAFAAVPFFLLWLNLLWTLVLGGAVLTSSLSYWRGEAFRRGFDSRGRFDDVLKILLLLDAAQKEGKALPVQEFRRHINMGYDELGELLEKLARHGYIYSGRQGWVLKTGADSIELNELFKLFVYRPLPVERDHVNQAVDAVMTPCLQTLNMTLAEFDAQAKKQQQS.

6 helical membrane-spanning segments follow: residues 43 to 63 (LLAL…FPVF), 100 to 120 (LTAI…RTID), 139 to 159 (FLVY…GISF), 176 to 196 (WSGA…LWGL), 210 to 230 (AFVG…LFTW), and 248 to 268 (VPFF…GAVL).

This sequence belongs to the UPF0761 family.

The protein localises to the cell inner membrane. The protein is UPF0761 membrane protein NMC0462 of Neisseria meningitidis serogroup C / serotype 2a (strain ATCC 700532 / DSM 15464 / FAM18).